Reading from the N-terminus, the 457-residue chain is MLDYFFNPRGIAVIGASNDPKKLGYEVFKNLKEYQGGKVYPVNVREEEVQGVKAYKSVKEIPGEVDLAIIVVPKKFVKQTLIECGEKGVKGVVIITAGFGETGEEGKREEKELVEIAHKYGMRIIGPNCVGIMNTHANLNATFITVAKKGNVAFISQSGALGAGIVYKTIKEDIGFSKFISVGNMADLDFADLMEYLADTQEDKAIALYIEGIKDGRRFIEVAKKVTKKKPVIALKAGKSESGSRAAASHTGSLAGSWKIYEAAFKQSGVLVANTIDEMLSMARAFTQPLPKGNRVAIMTNAGGPGVLTADEIDKRGLKLANLEEKTIEELRSFLPPMAAVKNPVDMIASARGEDYYRTAKLLLQDPNVDILIAICVVPTFAGMTPTEHAEGIIRAVKEVNNGKPVLALFMAGYVSEKAKELLEKNGIPTYERPEDVAAAAYALVQQAKNVGGGVNG.

The protein belongs to the acetate CoA ligase alpha subunit family. Heterotetramer of two alpha and two beta subunits.

It carries out the reaction acetate + ATP + CoA = acetyl-CoA + ADP + phosphate. Catalyzes the reversible formation of acetate and ATP from acetyl-CoA by using ADP and phosphate. Can use other substrates such as phenylacetyl-CoA, indoleacetyl-CoA and isobutyryl-CoA, but not succinyl-CoA. Seems to be involved primarily in the degradation of aryl-CoA esters to the corresponding acids. Participates in the conversion of acetyl-CoA to acetate and in the degradation of branched-chain amino acids via branched-chain-acyl-CoA esters. The chain is Acetate--CoA ligase [ADP-forming] II subunit alpha from Pyrococcus furiosus (strain ATCC 43587 / DSM 3638 / JCM 8422 / Vc1).